The following is a 339-amino-acid chain: Ferredoxin--NADP reductase (339 aa).

Residues Asp-36, Gln-44, Tyr-49, Val-89, Phe-123, Asp-290, and Thr-331 each contribute to the FAD site.

This sequence belongs to the ferredoxin--NADP reductase type 2 family. As to quaternary structure, homodimer. FAD is required as a cofactor.

The enzyme catalyses 2 reduced [2Fe-2S]-[ferredoxin] + NADP(+) + H(+) = 2 oxidized [2Fe-2S]-[ferredoxin] + NADPH. The protein is Ferredoxin--NADP reductase of Acidiphilium cryptum (strain JF-5).